The sequence spans 276 residues: Tyrosinase (276 aa).

Positions 38, 56, 66, 193, 197, and 219 each coordinate Cu cation.

The protein belongs to the tyrosinase family. Cu(2+) serves as cofactor.

It catalyses the reaction 2 L-dopa + O2 = 2 L-dopaquinone + 2 H2O. The catalysed reaction is L-tyrosine + O2 = L-dopaquinone + H2O. This is a copper-containing oxidase that functions in the formation of pigments such as melanins and other polyphenolic compounds. The polypeptide is Tyrosinase (melC2) (Streptomyces galbus).